Reading from the N-terminus, the 390-residue chain is DNA primase small subunit PriS (390 aa).

Catalysis depends on residues aspartate 98, aspartate 100, and aspartate 296.

Belongs to the eukaryotic-type primase small subunit family. Heterodimer of a small subunit (PriS) and a large subunit (PriL). It depends on Mg(2+) as a cofactor. Mn(2+) serves as cofactor.

Catalytic subunit of DNA primase, an RNA polymerase that catalyzes the synthesis of short RNA molecules used as primers for DNA polymerase during DNA replication. The small subunit contains the primase catalytic core and has DNA synthesis activity on its own. Binding to the large subunit stabilizes and modulates the activity, increasing the rate of DNA synthesis while decreasing the length of the DNA fragments, and conferring RNA synthesis capability. The DNA polymerase activity may enable DNA primase to also catalyze primer extension after primer synthesis. May also play a role in DNA repair. This Methanococcoides burtonii (strain DSM 6242 / NBRC 107633 / OCM 468 / ACE-M) protein is DNA primase small subunit PriS.